The primary structure comprises 424 residues: GTPase Obg (424 aa).

One can recognise an Obg domain in the interval 1–160 (MFDRVEIRIK…YELILELKLI (160 aa)). Residues 161–328 (ADVAIIGYPN…LLDKVAEKLA (168 aa)) enclose the OBG-type G domain. GTP-binding positions include 167–174 (GYPNVGKS), 192–196 (FTTLS), 213–216 (EVPG), 280–283 (NKID), and 309–311 (SAL). Positions 174 and 194 each coordinate Mg(2+). One can recognise an OCT domain in the interval 349–424 (PAPKGKMGFH…IITGRLEWYL (76 aa)).

Belongs to the TRAFAC class OBG-HflX-like GTPase superfamily. OBG GTPase family. Monomer. Mg(2+) is required as a cofactor.

The protein resides in the cytoplasm. Functionally, an essential GTPase which binds GTP, GDP and possibly (p)ppGpp with moderate affinity, with high nucleotide exchange rates and a fairly low GTP hydrolysis rate. Plays a role in control of the cell cycle, stress response, ribosome biogenesis and in those bacteria that undergo differentiation, in morphogenesis control. The polypeptide is GTPase Obg (Dehalococcoides mccartyi (strain ATCC BAA-2266 / KCTC 15142 / 195) (Dehalococcoides ethenogenes (strain 195))).